We begin with the raw amino-acid sequence, 217 residues long: MVHWEKHEGELSVVGVGAGSNDIWGVNHLGHIYHWDGHKWHKVDGELTNISVGHDGEVWGVNKNHNIYRLDRSNNKWTQIPGELVQVSVGSHHHVWGVNHLDHIYKWDHHHNKWDKIDGALTNVSVGKDGTVYGVNRGHQIYRWDGSKVDLVLGELVQIHVSDAEKIVGVNHLDHIYRLKHGKDWEKLDGELTWVSVGHHGEVWGVNKLHHIYKATL.

A run of 6 repeats spans residues 2–37, 38–74, 75–111, 112–146, 147–182, and 183–217. A 6 X approximate tandem repeats region spans residues 2-217; that stretch reads VHWEKHEGEL…KLHHIYKATL (216 aa).

This sequence belongs to the tectonin family.

It localises to the cell surface. The protein localises to the cytoplasmic vesicle membrane. Its function is as follows. Probably involved in bacterial recognition. May be a lectin that function as part of a transmembrane signaling complex during phagocytosis. The polypeptide is Tectonin-1 (TECA) (Physarum polycephalum (Slime mold)).